The sequence spans 292 residues: MSKAFHSIGLIGKPHHSGTHKTLKRLHHWLTMQSYDVYVEERVAAEIGPQVKSVDLLQIGEYCDLAIVVGGDGNMLGAARVLARFDIGVIGVNRGNLGFLTDLPPDTFEEALGKVLQGEYETEHRFLLESEVHRHGEMKSSNTAVNEAVLHPGKIAHMIEFEVYIDDKFMYSQRADGMIVSTPTGSTAYSLSAGGAILTPNLEALILVPMFPHTLSCRPIVVDACSIIKLVVSPDNGDALEVSCDGHVTLPVLPGDEIIVRRSKERLRLIHPKGYNYFHVLRNKLGWGSKLF.

The active-site Proton acceptor is the Asp72. Residues 72–73, 146–147, His157, Arg174, Asp176, and 187–192 contribute to the NAD(+) site; these read DG, NE, and TAYSLS.

Belongs to the NAD kinase family. A divalent metal cation is required as a cofactor.

It is found in the cytoplasm. It catalyses the reaction NAD(+) + ATP = ADP + NADP(+) + H(+). Its function is as follows. Involved in the regulation of the intracellular balance of NAD and NADP, and is a key enzyme in the biosynthesis of NADP. Catalyzes specifically the phosphorylation on 2'-hydroxyl of the adenosine moiety of NAD to yield NADP. This is NAD kinase from Shewanella loihica (strain ATCC BAA-1088 / PV-4).